The primary structure comprises 701 residues: Elongation factor G (701 aa).

The tr-type G domain occupies 8–286 (ERIRNIGIIA…AVVYYLPSPV (279 aa)). Residues 17–24 (AHIDAGKT), 85–89 (DTPGH), and 139–142 (NKMD) each bind GTP.

This sequence belongs to the TRAFAC class translation factor GTPase superfamily. Classic translation factor GTPase family. EF-G/EF-2 subfamily.

The protein localises to the cytoplasm. In terms of biological role, catalyzes the GTP-dependent ribosomal translocation step during translation elongation. During this step, the ribosome changes from the pre-translocational (PRE) to the post-translocational (POST) state as the newly formed A-site-bound peptidyl-tRNA and P-site-bound deacylated tRNA move to the P and E sites, respectively. Catalyzes the coordinated movement of the two tRNA molecules, the mRNA and conformational changes in the ribosome. This is Elongation factor G from Roseiflexus castenholzii (strain DSM 13941 / HLO8).